Consider the following 2475-residue polypeptide: Polyprotein pp220 (2475 aa).

Gly-2 is lipidated: N-myristoyl glycine; by host. Residues 2184–2211 (RNQIIGELNAFRTQLEDTLREVNNLVQT) are a coiled coil.

The protein belongs to the asfivirus polyprotein pp220 family. In terms of processing, specific enzymatic cleavages in vivo by the viral pS273R protease yield mature proteins.

It is found in the host cytoplasm. Its subcellular location is the host perinuclear region. The protein resides in the virion. It localises to the host nucleus. In terms of biological role, essential for the core assembly. Its myristoyl moiety may function as a membrane-anchoring signal to bind the developing core shell to the inner viral envelope. The structural protein p34 is a component of the virus core shell. Functionally, the structural protein p14 is a component of the virus core shell. Its function is as follows. The structural protein p37 is a component of the virus core shell. In terms of biological role, the structural protein p150 is a component of the virus core shell. This is Polyprotein pp220 from African swine fever virus (isolate Tick/Malawi/Lil 20-1/1983) (ASFV).